Consider the following 77-residue polypeptide: Ribonuclease P protein component 1 (77 aa).

This sequence belongs to the eukaryotic/archaeal RNase P protein component 1 family. In terms of assembly, consists of a catalytic RNA component and at least 4-5 protein subunits.

It localises to the cytoplasm. It catalyses the reaction Endonucleolytic cleavage of RNA, removing 5'-extranucleotides from tRNA precursor.. Part of ribonuclease P, a protein complex that generates mature tRNA molecules by cleaving their 5'-ends. This Sulfurisphaera tokodaii (strain DSM 16993 / JCM 10545 / NBRC 100140 / 7) (Sulfolobus tokodaii) protein is Ribonuclease P protein component 1.